The chain runs to 198 residues: Heme oxygenase PigA (198 aa).

His26 serves as a coordination point for heme b.

It belongs to the heme oxygenase family.

It carries out the reaction heme b + 3 AH2 + 3 O2 + 2 H(+) = biliverdin IXbeta + CO + Fe(2+) + 3 A + 3 H2O. The enzyme catalyses heme b + 3 AH2 + 3 O2 + 3 H(+) = biliverdin IXdelta + CO + Fe(2+) + 3 A + 3 H2O. In terms of biological role, involved in heme degradation. Catalyzes the degradation of heme to biliverdin, with the release of iron. Forms biliverdin delta (70%) and beta (30%). Under anaerobic conditions ferredoxin--NADP(+) reductase (fpr) can provide the necessary electrons; Bfd is not required. In Pseudomonas aeruginosa (strain ATCC 15692 / DSM 22644 / CIP 104116 / JCM 14847 / LMG 12228 / 1C / PRS 101 / PAO1), this protein is Heme oxygenase PigA.